A 332-amino-acid polypeptide reads, in one-letter code: Ribosomal RNA small subunit methyltransferase H (332 aa).

S-adenosyl-L-methionine contacts are provided by residues G34–H36, D59, F86, D112, and Q119.

Belongs to the methyltransferase superfamily. RsmH family.

It is found in the cytoplasm. It carries out the reaction cytidine(1402) in 16S rRNA + S-adenosyl-L-methionine = N(4)-methylcytidine(1402) in 16S rRNA + S-adenosyl-L-homocysteine + H(+). In terms of biological role, specifically methylates the N4 position of cytidine in position 1402 (C1402) of 16S rRNA. This chain is Ribosomal RNA small subunit methyltransferase H, found in Chlorobium phaeobacteroides (strain BS1).